The sequence spans 585 residues: Clathrin heavy chain linker domain-containing protein 1 (585 aa).

Residues 118 to 239 (QLEAKMRIID…DLRFRHQRLQ (122 aa)) are a coiled coil.

The chain is Clathrin heavy chain linker domain-containing protein 1 (Clhc1) from Rattus norvegicus (Rat).